The chain runs to 276 residues: Elongation factor Ts, mitochondrial (276 aa).

Belongs to the EF-Ts family.

The protein resides in the mitochondrion. Functionally, associates with the EF-Tu.GDP complex and induces the exchange of GDP to GTP. It remains bound to the aminoacyl-tRNA.EF-Tu.GTP complex up to the GTP hydrolysis stage on the ribosome. The chain is Elongation factor Ts, mitochondrial from Leishmania major.